An 80-amino-acid polypeptide reads, in one-letter code: Regulatory protein HrpD6 (80 aa).

Its function is as follows. Involved in the regulation of several genes of the hrp-hrc-hpa cluster, which encodes a type III secretion system (T3SS). Upregulates the expression of hpa2, hpa1 and hpaB and partially controls the expression of hrcC and hrcT. Controls the secretion of the T3SS TAL effector AvrXa27. Also regulates the expression of several HrpX-regulated protein (Xrp) genes. Has no influence on hrpG or hrpX expression. This chain is Regulatory protein HrpD6, found in Xanthomonas oryzae pv. oryzicola.